Consider the following 298-residue polypeptide: Protein OS-9 homolog (298 aa).

The signal sequence occupies residues 1–25; it reads MGLAGGARVVLFVVAAAAAAALTAA. N-linked (GlcNAc...) asparagine glycosylation is present at Asn95. Residues 121-246 enclose the MRH domain; sequence DQCFYRHEGW…TVQSPMLCKN (126 aa). Cys123 and Cys136 are oxidised to a cystine. A mannooligosaccharide derivative-binding residues include Trp130, Trp131, and Gln143. 2 N-linked (GlcNAc...) asparagine glycosylation sites follow: Asn171 and Asn197. Disulfide bonds link Cys201-Cys232 and Cys216-Cys244. Positions 202, 208, 228, and 234 each coordinate a mannooligosaccharide derivative.

It belongs to the OS-9 family. In terms of assembly, interacts with HRD3.

The protein resides in the endoplasmic reticulum. Lectin which functions in endoplasmic reticulum (ER) quality control and ER-associated degradation (ERAD). May bind terminally misfolded non-glycosylated proteins as well as improperly folded glycoproteins, retain them in the ER, and possibly transfer them to the ubiquitination machinery and promote their degradation. In Oryza sativa subsp. japonica (Rice), this protein is Protein OS-9 homolog.